A 213-amino-acid chain; its full sequence is Isomeliandiol synthase MOI2 (213 aa).

5 helical membrane-spanning segments follow: residues Ala-18–Ile-38, Val-52–Phe-72, Ile-109–Ala-129, Ile-137–Ala-157, and Tyr-171–Ile-191. Residues Met-48–Ala-190 enclose the EXPERA domain.

This sequence belongs to the EBP family. As to expression, mainly expressed in petioles.

The protein localises to the membrane. The catalysed reaction is 7,8-epoxymelianol = isomeliandiol. It participates in secondary metabolite biosynthesis; terpenoid biosynthesis. Isomerase involved in the biosynthesis of limonoids triterpene natural products such as azadirachtin, an antifeedant widely used as bioinsecticide, and possessing many medicinal applications including anti-tumoral, anti-malarial, anti-rheumatic, antibacterial, anti-inflammatory, anti-pyretic and diuretic effects. Catalyzes the conversion of 7,8-epoxymelianol to isomeliandiol via skeletal rearrangements. This is Isomeliandiol synthase MOI2 from Melia azedarach (Chinaberry tree).